A 35-amino-acid polypeptide reads, in one-letter code: MEALVYTFLLVSTLGIIFFAIFFREPPKVPTKKIK.

Residues 3–23 traverse the membrane as a helical segment; the sequence is ALVYTFLLVSTLGIIFFAIFF.

This sequence belongs to the PsbT family. PSII is composed of 1 copy each of membrane proteins PsbA, PsbB, PsbC, PsbD, PsbE, PsbF, PsbH, PsbI, PsbJ, PsbK, PsbL, PsbM, PsbT, PsbY, PsbZ, Psb30/Ycf12, at least 3 peripheral proteins of the oxygen-evolving complex and a large number of cofactors. It forms dimeric complexes.

Its subcellular location is the plastid. The protein resides in the chloroplast thylakoid membrane. In terms of biological role, found at the monomer-monomer interface of the photosystem II (PS II) dimer, plays a role in assembly and dimerization of PSII. PSII is a light-driven water plastoquinone oxidoreductase, using light energy to abstract electrons from H(2)O, generating a proton gradient subsequently used for ATP formation. In Gunnera chilensis (Chilean rhubarb), this protein is Photosystem II reaction center protein T.